The following is a 351-amino-acid chain: Biotin synthase (351 aa).

The region spanning 48 to 265 (NKVRIHILDN…LCMFRLINPD (218 aa)) is the Radical SAM core domain. [4Fe-4S] cluster contacts are provided by Cys63, Cys67, and Cys70. Cys107, Cys139, Cys199, and Arg269 together coordinate [2Fe-2S] cluster.

The protein belongs to the radical SAM superfamily. Biotin synthase family. In terms of assembly, homodimer. Requires [4Fe-4S] cluster as cofactor. [2Fe-2S] cluster serves as cofactor.

It catalyses the reaction (4R,5S)-dethiobiotin + (sulfur carrier)-SH + 2 reduced [2Fe-2S]-[ferredoxin] + 2 S-adenosyl-L-methionine = (sulfur carrier)-H + biotin + 2 5'-deoxyadenosine + 2 L-methionine + 2 oxidized [2Fe-2S]-[ferredoxin]. Its pathway is cofactor biosynthesis; biotin biosynthesis; biotin from 7,8-diaminononanoate: step 2/2. Functionally, catalyzes the conversion of dethiobiotin (DTB) to biotin by the insertion of a sulfur atom into dethiobiotin via a radical-based mechanism. This chain is Biotin synthase, found in Leptospira interrogans serogroup Icterohaemorrhagiae serovar copenhageni (strain Fiocruz L1-130).